The sequence spans 249 residues: ATP synthase subunit a (249 aa).

6 consecutive transmembrane segments (helical) span residues 26–46 (FTNS…FLYL), 84–104 (FFPF…LGLF), 114–134 (IVVT…YGFW), 143–163 (LFVP…IEVI), 185–205 (ITLK…VAGA), and 208–228 (AVLP…VAFL).

Belongs to the ATPase A chain family. As to quaternary structure, F-type ATPases have 2 components, CF(1) - the catalytic core - and CF(0) - the membrane proton channel. CF(1) has five subunits: alpha(3), beta(3), gamma(1), delta(1), epsilon(1). CF(0) has three main subunits: a(1), b(2) and c(9-12). The alpha and beta chains form an alternating ring which encloses part of the gamma chain. CF(1) is attached to CF(0) by a central stalk formed by the gamma and epsilon chains, while a peripheral stalk is formed by the delta and b chains.

The protein resides in the cell inner membrane. In terms of biological role, key component of the proton channel; it plays a direct role in the translocation of protons across the membrane. The polypeptide is ATP synthase subunit a (Chelativorans sp. (strain BNC1)).